The following is a 445-amino-acid chain: MKLFGTDGVRGKAGEFLDSFLAMRLAMAAGIYFKDKSITNNILVGKDTRRSGYMIENAIVSGLTSIGYNVIQIGPMPTPAIAFLTEDMRCDAGIMISASHNPYYDNGIKFFDAHGNKLSEDIEKKIEEIYFDDKLIQASKVDMEKIGQAKRIDDVIGRYIVSIKNSFPKDLTLKSLRVVLDVAHGAAYKVAPTVFKELGAEVIVMSDKPNGLNINENCGALHPANLAAEVKRLRADVGFAFDGDADRLVVVDEKGEVANGDSLLGVLALYLKEQGKLQSSVVATIMSNGALKEFLNKHGIELDTCNVGDKYVLEKLKVNGGNFGGEQSGHIIFSDYAKTGDGLIAALQFSALMLSKKKSASSILGQVKPYPQLLTNLKIAEKKDLDKIKGLKELKKDLENKNINTLFRYSGTENLIRLLLEAKDIKLLEKEMKNVVEFFKKALNG.

Ser-99 serves as the catalytic Phosphoserine intermediate. Ser-99, Asp-242, Asp-244, and Asp-246 together coordinate Mg(2+). Phosphoserine is present on Ser-99.

This sequence belongs to the phosphohexose mutase family. Mg(2+) serves as cofactor. Activated by phosphorylation.

It catalyses the reaction alpha-D-glucosamine 1-phosphate = D-glucosamine 6-phosphate. In terms of biological role, catalyzes the conversion of glucosamine-6-phosphate to glucosamine-1-phosphate. This chain is Phosphoglucosamine mutase, found in Campylobacter jejuni subsp. jejuni serotype O:6 (strain 81116 / NCTC 11828).